Consider the following 75-residue polypeptide: Kappa-scoloptoxin(03)-Ssm1d (75 aa).

The signal sequence occupies residues methionine 1–serine 23.

This sequence belongs to the scoloptoxin-03 family. In terms of processing, contains 3 disulfide bonds. As to expression, expressed by the venom gland.

It localises to the secreted. Functionally, inhibits voltage-gated potassium channels. This is Kappa-scoloptoxin(03)-Ssm1d from Scolopendra mutilans (Chinese red-headed centipede).